We begin with the raw amino-acid sequence, 787 residues long: Probable basic-leucine zipper transcription factor J (787 aa).

Over residues 18–90 (NSNIHNNTHN…NNTQNTNNGT (73 aa)) the composition is skewed to low complexity. Disordered regions lie at residues 18–95 (NSNI…LTPL), 153–173 (LNLSSTGNHEDPVQVPMNNNP), 186–306 (LQSQ…NNNT), 343–372 (DSLLNQTLNNNNNNNNNNNNNNNNTTIQTS), 401–441 (LSSA…NNSN), and 473–507 (ASSESAQSESSQESDYDALNERNSGVKKRGRDEDQ). Low complexity-rich tracts occupy residues 186-223 (LQSQNNNSSNNNNNNNNNGSNTPLNGSNGSNNNYSSPI), 235-258 (SSPIQEYPYYSPSSSPHSNESTSP), 273-305 (NNNNNNNNNNNNNNNNNNNNNNNNNNKNNLNNN), and 351-366 (NNNNNNNNNNNNNNNN). The span at 473–483 (ASSESAQSESS) shows a compositional bias: low complexity. The bZIP domain occupies 549 to 612 (ELKKQRRLVK…KALKKQLYSL (64 aa)). Residues 551–603 (KKQRRLVKNREYASQSRSRRKIYVENIETKLQKTNQDCASIKSQLNSVKEENK) are basic motif. Residues 605–612 (LKKQLYSL) form a leucine-zipper region. Disordered regions lie at residues 723–747 (SNYIINNNNNESTSETTTNNKVVST) and 763–787 (DKEVPQKCKDSSDLKCDSPPLSPLN). Over residues 763 to 778 (DKEVPQKCKDSSDLKC) the composition is skewed to basic and acidic residues.

The protein belongs to the bZIP family.

It is found in the nucleus. Functionally, probable transcriptional regulator. This Dictyostelium discoideum (Social amoeba) protein is Probable basic-leucine zipper transcription factor J (bzpJ).